The chain runs to 317 residues: Transcription factor EC (317 aa).

The interval M1–I90 is necessary for transcriptional transactivation. In terms of domain architecture, bHLH spans Q110–L163. Residues T242–L317 are necessary for transcriptional transactivation.

Belongs to the MiT/TFE family. In terms of assembly, homodimer. Forms heterodimers with TFE3. Forms heterodimers with MITF. Interacts with MITF. As to expression, expressed in kidney, spleen, lung, liver, testis and muscle.

Its subcellular location is the nucleus. Functionally, transcriptional regulator that acts as a repressor or an activator. Acts as a transcriptional repressor on minimal promoter containing mu E3 enhancer sequence. Binds to mu E3 DNA sequence of the immunoglobulin heavy-chain gene enhancer. Acts as a transcriptional transactivator on the proximal promoter region of the tartrate-resistant acid phosphatase (TRAP) E-box containing promoter. Collaborates with MITF in target gene activation. Acts as a transcriptional repressor on minimal promoter containing mu E3 enhancer sequence. Binds to mu E3 DNA sequence of the immunoglobulin heavy-chain gene enhancer. Binds DNA in a homo- or heterodimeric form. The polypeptide is Transcription factor EC (Tfec) (Rattus norvegicus (Rat)).